Consider the following 218-residue polypeptide: MTQDEMKKAAGWAALKYVEKGSIVGVGTGSTVNHFIDALGTIKDEIKGAVSSSIASTAKLEALGIRVYDCNDVSELDIYVDGADEINPERDMIKGGGAALTREKIVAAIAKKFVCIVDGTKAVDVLGNFPLPVEVIPMARSYVARELVKLGGDPVYREGVITDNGNVILDVYNMKITHPKDLESKINGIAGVVTVGLFAHRGADVVITGTPQGAKIEE.

Residues 28-31, 81-84, and 94-97 contribute to the substrate site; these read TGST, DGAD, and KGGG. Glu-103 acts as the Proton acceptor in catalysis. Lys-121 provides a ligand contact to substrate.

Belongs to the ribose 5-phosphate isomerase family. As to quaternary structure, homodimer.

It catalyses the reaction aldehydo-D-ribose 5-phosphate = D-ribulose 5-phosphate. It functions in the pathway carbohydrate degradation; pentose phosphate pathway; D-ribose 5-phosphate from D-ribulose 5-phosphate (non-oxidative stage): step 1/1. Its function is as follows. Catalyzes the reversible conversion of ribose-5-phosphate to ribulose 5-phosphate. This is Ribose-5-phosphate isomerase A from Vibrio cholerae serotype O1 (strain ATCC 39541 / Classical Ogawa 395 / O395).